The following is a 277-amino-acid chain: Photosystem I assembly factor PSA3, chloroplastic (277 aa).

A chloroplast-targeting transit peptide spans 1-45 (MVVVTHISTSFHQISPSFFHLRLRNPSTTSSSRPKLDGGFALSIR).

As to quaternary structure, interacts with PYG7.

It localises to the plastid. The protein resides in the chloroplast. Its subcellular location is the chloroplast thylakoid membrane. Functionally, nuclear genome-encoded factor required for the accumulation of photosystem I (PSI). Functions as a PSI biogenesis factor. Cooperates with PYG7 to promote the stable assembly of PSI in the thylakoid membrane. May target primarily the PsaC subunit. Does not seem to be required for the expression of chloroplast genes encoding PSI subunits. The sequence is that of Photosystem I assembly factor PSA3, chloroplastic from Arabidopsis thaliana (Mouse-ear cress).